We begin with the raw amino-acid sequence, 314 residues long: Malate dehydrogenase (314 aa).

NAD(+) contacts are provided by residues 13–18 and D37; that span reads GGGQIG. 2 residues coordinate substrate: R88 and R94. NAD(+)-binding positions include N101 and 124 to 126; that span reads VAN. N126 and R157 together coordinate substrate. H181 acts as the Proton acceptor in catalysis.

The protein belongs to the LDH/MDH superfamily. MDH type 3 family.

It catalyses the reaction (S)-malate + NAD(+) = oxaloacetate + NADH + H(+). Catalyzes the reversible oxidation of malate to oxaloacetate. The sequence is that of Malate dehydrogenase from Myxococcus xanthus.